Reading from the N-terminus, the 380-residue chain is Phospho-N-acetylmuramoyl-pentapeptide-transferase (380 aa).

Transmembrane regions (helical) follow at residues 26-46 (IVAAGLTAMVLGLLLGPIFIE), 75-95 (MGGALILASVAIATLLFADLA), 98-118 (FVWAALLVTLGYGAIGFTDDW), 135-155 (LVLQVLVVVVVYYACLTDWRF), 161-181 (FPWVFVGSYVDLHVTLPFVPS), 183-203 (LFNPDLGFLYLPFMVFVVIAT), 222-242 (VVSAMTFLALSYVAGATIAGF), 259-279 (LGVFCSAIFGAGVAFLWYNTY), 283-303 (VFMGDVGSLALGGGLGMMAVL), 311-331 (AILHGVFLTETVSVILQVWSF), and 357-377 (KIIVRFWIISVMLALVALLSI).

The protein belongs to the glycosyltransferase 4 family. MraY subfamily. The cofactor is Mg(2+).

It localises to the cell inner membrane. It carries out the reaction UDP-N-acetyl-alpha-D-muramoyl-L-alanyl-gamma-D-glutamyl-meso-2,6-diaminopimeloyl-D-alanyl-D-alanine + di-trans,octa-cis-undecaprenyl phosphate = di-trans,octa-cis-undecaprenyl diphospho-N-acetyl-alpha-D-muramoyl-L-alanyl-D-glutamyl-meso-2,6-diaminopimeloyl-D-alanyl-D-alanine + UMP. It participates in cell wall biogenesis; peptidoglycan biosynthesis. In terms of biological role, catalyzes the initial step of the lipid cycle reactions in the biosynthesis of the cell wall peptidoglycan: transfers peptidoglycan precursor phospho-MurNAc-pentapeptide from UDP-MurNAc-pentapeptide onto the lipid carrier undecaprenyl phosphate, yielding undecaprenyl-pyrophosphoryl-MurNAc-pentapeptide, known as lipid I. This Anaeromyxobacter dehalogenans (strain 2CP-1 / ATCC BAA-258) protein is Phospho-N-acetylmuramoyl-pentapeptide-transferase.